The chain runs to 480 residues: Alpha-glucosidase (480 aa).

4-70 is a binding site for NAD(+); it reads VKIGIIGAGS…ADLKFEKTTS (67 aa). The substrate site is built by Asp119 and Asn153. Cys174 contributes to the Mn(2+) binding site. Residue His175 is the Proton donor of the active site. Residue His203 participates in Mn(2+) binding. The Proton acceptor role is filled by Asp260.

This sequence belongs to the glycosyl hydrolase 4 family. Homodimer. Requires NAD(+) as cofactor. Mn(2+) is required as a cofactor.

It catalyses the reaction Hydrolysis of terminal, non-reducing (1-&gt;4)-linked alpha-D-glucose residues with release of alpha-D-glucose.. Inhibited by EDTA in vitro. In terms of biological role, is able to hydrolyze diverse types of alpha-glycoside bonds in di- and trisaccharides: alpha-1,4 bonds of maltose and maltotriose, alpha-1,1 bonds of trehalose, alpha-1,2 bonds of sucrose, alpha-1,3 bonds of turanose and melizitose, alpha-1,6 bonds of isomaltose and melibiose. AglA is not specific with respect to the configuration at the C-4 position of its substrates because it also possesses alpha-galactosidase activity. Acts on the substrate from the non-reducing end of the chain. The activity of AglA drops with increasing length of the saccharide chain. Does not hydrolyze alpha-, beta-, and gamma-cyclodextrins or polysaccharides (starch, pullulan, amylose, amylopectin, glycogen). Does not cleave beta-glycosidic bonds in di-, oligo-, or polysaccharides. The protein is Alpha-glucosidase (aglA) of Thermotoga neapolitana.